Consider the following 218-residue polypeptide: ATP phosphoribosyltransferase (218 aa).

Belongs to the ATP phosphoribosyltransferase family. Short subfamily. In terms of assembly, heteromultimer composed of HisG and HisZ subunits.

It localises to the cytoplasm. It catalyses the reaction 1-(5-phospho-beta-D-ribosyl)-ATP + diphosphate = 5-phospho-alpha-D-ribose 1-diphosphate + ATP. The protein operates within amino-acid biosynthesis; L-histidine biosynthesis; L-histidine from 5-phospho-alpha-D-ribose 1-diphosphate: step 1/9. Catalyzes the condensation of ATP and 5-phosphoribose 1-diphosphate to form N'-(5'-phosphoribosyl)-ATP (PR-ATP). Has a crucial role in the pathway because the rate of histidine biosynthesis seems to be controlled primarily by regulation of HisG enzymatic activity. The protein is ATP phosphoribosyltransferase of Lactiplantibacillus plantarum (strain ATCC BAA-793 / NCIMB 8826 / WCFS1) (Lactobacillus plantarum).